Consider the following 437-residue polypeptide: Palmitoyltransferase PFA4 (437 aa).

Residues 1-12 (MAGLNDVPFIKG) lie on the Cytoplasmic side of the membrane. A helical membrane pass occupies residues 13 to 33 (LAVPSVCALIIFLGYASQFLF). Residues 34 to 48 (NYSTTLEPGPPTRRE) lie on the Lumenal side of the membrane. The helical transmembrane segment at 49–69 (TIIFNGLLLVLWITYYRTVAT) threads the bilayer. Residues 70 to 130 (DPGRYIFKDR…RNCVSMTTFP (61 aa)) are Cytoplasmic-facing. Positions 87-137 (RWCNKCAAPKPPRAHHCRHCARCVPRMDHHCPWTRNCVSMTTFPHFLRFLI) constitute a DHHC domain. Cys117 acts as the S-palmitoyl cysteine intermediate in catalysis. The chain crosses the membrane as a helical span at residues 131-151 (HFLRFLIYTNMSLWMLGYFLW). Topologically, residues 152-173 (QRFSKIWEHRRLPAYLGPSFYG) are lumenal. Residues 174–194 (LICLSLISIVNFVTTVALGIM) traverse the membrane as a helical segment. The Cytoplasmic segment spans residues 195 to 437 (LINTVKSWVF…KILKKDGLDD (243 aa)). Residues 377-419 (LDQGLGWVNSDGDRLRDYGVDEEASEPEGVNDDDDDDDDDDVP) form a disordered region. Residues 396 to 419 (VDEEASEPEGVNDDDDDDDDDDVP) show a composition bias toward acidic residues.

It belongs to the DHHC palmitoyltransferase family. PFA4 subfamily.

The protein localises to the endoplasmic reticulum membrane. The enzyme catalyses L-cysteinyl-[protein] + hexadecanoyl-CoA = S-hexadecanoyl-L-cysteinyl-[protein] + CoA. Functionally, mediates the reversible addition of palmitate to target proteins, thereby regulating their membrane association and biological function. The sequence is that of Palmitoyltransferase PFA4 from Gibberella zeae (strain ATCC MYA-4620 / CBS 123657 / FGSC 9075 / NRRL 31084 / PH-1) (Wheat head blight fungus).